The sequence spans 121 residues: Small ribosomal subunit protein uS11 (121 aa).

Belongs to the universal ribosomal protein uS11 family. As to quaternary structure, part of the 30S ribosomal subunit. Interacts with proteins S7 and S18. Binds to IF-3.

In terms of biological role, located on the platform of the 30S subunit, it bridges several disparate RNA helices of the 16S rRNA. Forms part of the Shine-Dalgarno cleft in the 70S ribosome. The protein is Small ribosomal subunit protein uS11 of Mycoplasma genitalium (strain ATCC 33530 / DSM 19775 / NCTC 10195 / G37) (Mycoplasmoides genitalium).